Here is a 212-residue protein sequence, read N- to C-terminus: External core antigen (212 aa).

Residues 1–19 form the signal peptide; sequence MQLFHLCLIISCSCPTVQA. Residues 25-27 are HBEAG; it reads GWL. The tract at residues 165 to 212 is disordered; the sequence is NAPILSTLPETTVVRRRGRSPRRRTPSPRRRRSQSPRRRRSQSRESQC. Basic residues predominate over residues 178–205; the sequence is VRRRGRSPRRRTPSPRRRRSQSPRRRRS. Residues 184-190 form a 1; half-length repeat; it reads SPRRRTP. Residues 184-206 form a 3 X 8 AA repeats of S-P-R-R-R-R-S-Q region; sequence SPRRRTPSPRRRRSQSPRRRRSQ. Positions 184-212 are excised as a propeptide; sequence SPRRRTPSPRRRRSQSPRRRRSQSRESQC. Repeat copies occupy residues 191–198 and 199–206.

The protein belongs to the orthohepadnavirus precore antigen family. As to quaternary structure, homodimerizes. In terms of processing, phosphorylated. Cleaved by host furin.

It is found in the secreted. It localises to the host nucleus. Its function is as follows. May regulate immune response to the intracellular capsid in acting as a T-cell tolerogen, by having an immunoregulatory effect which prevents destruction of infected cells by cytotoxic T-cells. This immune regulation may predispose to chronicity during perinatal infections and prevent severe liver injury during adult infections. This is External core antigen from Homo sapiens (Human).